The sequence spans 443 residues: Xaa-Pro dipeptidase (443 aa).

Residues D246, D257, H339, E384, and E423 each contribute to the Mn(2+) site.

This sequence belongs to the peptidase M24B family. Bacterial-type prolidase subfamily. Mn(2+) is required as a cofactor.

It catalyses the reaction Xaa-L-Pro dipeptide + H2O = an L-alpha-amino acid + L-proline. Splits dipeptides with a prolyl residue in the C-terminal position. The polypeptide is Xaa-Pro dipeptidase (Escherichia coli O157:H7).